We begin with the raw amino-acid sequence, 500 residues long: Low-density lipoprotein receptor-related protein 11 (500 aa).

A signal peptide spans 1 to 37 (MASVAQESAGSQRRLPPRHGALRGLLLLCLWLPSGRA). The Extracellular segment spans residues 38-450 (ALPPAAPLSE…GGEHPAPETG (413 aa)). The MANSC domain occupies 99–184 (AMPDAIIRTK…FALHSGYSSY (86 aa)). Residues Asn-164 and Asn-291 are each glycosylated (N-linked (GlcNAc...) asparagine). Residues 210-305 (PLSKAGQDVV…VLRAAYSTGG (96 aa)) form the PKD domain. In terms of domain architecture, LDL-receptor class A spans 309 to 345 (TCSRYHFFCDDGCCIDITLACDGVQQCPDGSDEDFCQ). 3 disulfides stabilise this stretch: Cys-310–Cys-322, Cys-317–Cys-335, and Cys-329–Cys-344. The interval 358–445 (AASPALPRTT…KGDGGGGEHP (88 aa)) is disordered. The N-linked (GlcNAc...) asparagine glycan is linked to Asn-401. Residues 451-473 (AVLPLALGLAITALLLLMVACRL) traverse the membrane as a helical segment. Over 474 to 500 (RLVKQKLKKARPITSEESDYLINGMYL) the chain is Cytoplasmic. At Ser-491 the chain carries Phosphoserine.

This sequence belongs to the LDLR family.

Its subcellular location is the membrane. The sequence is that of Low-density lipoprotein receptor-related protein 11 (LRP11) from Homo sapiens (Human).